A 498-amino-acid chain; its full sequence is Dynein regulatory complex subunit 5 (498 aa).

2 disordered regions span residues 27–52 (ALGS…LKTK) and 200–223 (MPTP…EPEK). Low complexity predominate over residues 28–47 (LGSSSTGPTSLKTSSTPTPG). LRR repeat units follow at residues 276 to 299 (CHTL…ILIR), 306 to 327 (ALEE…AAAK), 333 to 353 (RLRV…QSLA), 361 to 382 (NLVF…AIAH), 389 to 409 (CLSV…TLLS), and 417 to 438 (TLVS…QLLE).

The protein belongs to the DRC5 family. In terms of assembly, component of the nexin-dynein regulatory complex (N-DRC). Interacts with DRC1. Interacts with FBXL13/DRC6, DRC3 and DRC7. As to expression, testis-specific (at protein level).

The protein localises to the cell projection. It localises to the cilium. The protein resides in the flagellum. Its subcellular location is the cytoplasm. It is found in the cytoskeleton. The protein localises to the flagellum axoneme. Component of the nexin-dynein regulatory complex (N-DRC) a key regulator of ciliary/flagellar motility which maintains the alignment and integrity of the distal axoneme and regulates microtubule sliding in motile axonemes. May play a role in the assembly of N-DRC. Required for sperm motility. The polypeptide is Dynein regulatory complex subunit 5 (Tcte1) (Mus musculus (Mouse)).